The chain runs to 488 residues: Annexin A7 (488 aa).

The segment covering 1-18 (MSYPGYPPTGYPPFPGYP) has biased composition (pro residues). Disordered stretches follow at residues 1–49 (MSYP…YPQV) and 71–150 (GYPG…NTES). The segment at 1–143 (MSYPGYPPTG…QYPGGQPTYP (143 aa)) is repeat-rich region. The segment at 5–20 (GYPPTGYPPFPGYPPA) is 3 X 5 AA tandem repeats of G-Y-P-P-X. Over residues 89 to 102 (PGQGFGVPPGGAGF) the composition is skewed to gly residues. 4 Annexin repeats span residues 185–256 (FDAM…ALFM), 257–328 (PPTY…SMCQ), 340–412 (QMAQ…TILQ), and 416–487 (NRPA…AIVG). Lys233 carries the N6-acetyllysine modification.

Belongs to the annexin family. As to quaternary structure, interacts with PDCD6.

Calcium/phospholipid-binding protein which promotes membrane fusion and is involved in exocytosis. The polypeptide is Annexin A7 (ANXA7) (Macaca fascicularis (Crab-eating macaque)).